Consider the following 411-residue polypeptide: MADVVVGIQWGDEGKGKIVDRIAKDYDFVVRYQGGHNAGHTIVHKGVKHSLHLMPSGVLYPKCKNIISSAVVVSVKDLCEEISAFEDLENRLFVSDRAHVILPYHAKKDAFKEQSQNIGTTKKGIGPCYEDKMARSGIRMGDLLDDKILEEKLNAHFKAIEPFKEAYGLGENYEKDLRGYFKAYAPKIRPFIKDTTSMLIEANQKGEKILLEGAQGTLLDIDLGTYPFVTSSNTTSASACVSTGLNPKAINEVIGITKAYCTRVGNGPFPSEDTTPMGDHLRTKGAEFGTTTKRPRRCGWLDLVALKYACALNGCTQLALMKLDVLDGIDAIKVCVAYERKGERLEAFPSDLKDCMPIYQTFKGWEKSVGVRKLEDLEPNAREYIRFIEKEVGVKIGLISTSPEREDTIFL.

Residues 11–17 (GDEGKGK) and 39–41 (GHT) each bind GTP. The active-site Proton acceptor is aspartate 12. 2 residues coordinate Mg(2+): aspartate 12 and glycine 39. IMP contacts are provided by residues 12–15 (DEGK), 37–40 (NAGH), threonine 121, arginine 135, glutamine 215, threonine 230, and arginine 294. Histidine 40 (proton donor) is an active-site residue. 290–296 (TTTKRPR) is a substrate binding site. GTP-binding positions include arginine 296, 322-324 (KLD), and 400-402 (STS).

This sequence belongs to the adenylosuccinate synthetase family. In terms of assembly, homodimer. The cofactor is Mg(2+).

It is found in the cytoplasm. It catalyses the reaction IMP + L-aspartate + GTP = N(6)-(1,2-dicarboxyethyl)-AMP + GDP + phosphate + 2 H(+). The protein operates within purine metabolism; AMP biosynthesis via de novo pathway; AMP from IMP: step 1/2. Plays an important role in the de novo pathway of purine nucleotide biosynthesis. Catalyzes the first committed step in the biosynthesis of AMP from IMP. The protein is Adenylosuccinate synthetase of Helicobacter pylori (strain P12).